We begin with the raw amino-acid sequence, 431 residues long: NADH-quinone oxidoreductase chain 1 (431 aa).

Position 54–63 (54–63 (GRGGAGFPTG)) interacts with NAD(+). Residue 167–214 (GAGAYICGEETALLESLEGKKGMPRMKPPFPAGAGLYGCPTTVNNVES) participates in FMN binding. Residues Cys346, Cys349, Cys352, and Cys392 each contribute to the [4Fe-4S] cluster site.

The protein belongs to the complex I 51 kDa subunit family. NDH-1 is composed of at least 14 different subunits, Nqo1 to Nqo14. The complex has a L-shaped structure, with the hydrophobic arm (subunits Nqo7, Nqo8, Nqo10 to Nqo14) embedded in the inner membrane and the hydrophilic peripheral arm (subunits Nqo1 to Nqo6, Nqo9) protruding into the bacterial cytoplasm. The hydrophilic domain contains all the redox centers. Requires FMN as cofactor. [4Fe-4S] cluster serves as cofactor.

Its subcellular location is the cell inner membrane. It catalyses the reaction a quinone + NADH + 5 H(+)(in) = a quinol + NAD(+) + 4 H(+)(out). In terms of biological role, NDH-1 shuttles electrons from NADH, via FMN and iron-sulfur (Fe-S) centers, to quinones in the respiratory chain. The immediate electron acceptor for the enzyme in this species is believed to be ubiquinone. Couples the redox reaction to proton translocation (for every two electrons transferred, four hydrogen ions are translocated across the cytoplasmic membrane), and thus conserves the redox energy in a proton gradient. This Paracoccus denitrificans protein is NADH-quinone oxidoreductase chain 1 (nqo1).